Reading from the N-terminus, the 272-residue chain is Ribosomal RNA small subunit methyltransferase A (272 aa).

6 residues coordinate S-adenosyl-L-methionine: His10, Leu12, Gly37, Glu57, Asp82, and Asn98.

Belongs to the class I-like SAM-binding methyltransferase superfamily. rRNA adenine N(6)-methyltransferase family. RsmA subfamily.

Its subcellular location is the cytoplasm. It catalyses the reaction adenosine(1518)/adenosine(1519) in 16S rRNA + 4 S-adenosyl-L-methionine = N(6)-dimethyladenosine(1518)/N(6)-dimethyladenosine(1519) in 16S rRNA + 4 S-adenosyl-L-homocysteine + 4 H(+). Functionally, specifically dimethylates two adjacent adenosines (A1518 and A1519) in the loop of a conserved hairpin near the 3'-end of 16S rRNA in the 30S particle. May play a critical role in biogenesis of 30S subunits. The sequence is that of Ribosomal RNA small subunit methyltransferase A from Gloeobacter violaceus (strain ATCC 29082 / PCC 7421).